The following is a 485-amino-acid chain: Glutamyl-tRNA(Gln) amidotransferase subunit A (485 aa).

Residues K78 and S153 each act as charge relay system in the active site. Residue S177 is the Acyl-ester intermediate of the active site.

The protein belongs to the amidase family. GatA subfamily. In terms of assembly, heterotrimer of A, B and C subunits.

The catalysed reaction is L-glutamyl-tRNA(Gln) + L-glutamine + ATP + H2O = L-glutaminyl-tRNA(Gln) + L-glutamate + ADP + phosphate + H(+). Its function is as follows. Allows the formation of correctly charged Gln-tRNA(Gln) through the transamidation of misacylated Glu-tRNA(Gln) in organisms which lack glutaminyl-tRNA synthetase. The reaction takes place in the presence of glutamine and ATP through an activated gamma-phospho-Glu-tRNA(Gln). This chain is Glutamyl-tRNA(Gln) amidotransferase subunit A, found in Geobacter sulfurreducens (strain ATCC 51573 / DSM 12127 / PCA).